The primary structure comprises 140 residues: MKRKHKRLLFVLASFCAAGCALLFILSELRESVSFFYTTSELLSGPQRESNLPVRVGGMVVKGSIARSTDSISFDLTDFKTELNVVYSGMLPPLFGEGVGAVVKGRLLHGKFVADEVLAKHDEKYMPKKYTAPKSSPEPK.

Residues 1-7 (MKRKHKR) lie on the Cytoplasmic side of the membrane. The chain crosses the membrane as a helical; Signal-anchor for type II membrane protein span at residues 8-28 (LLFVLASFCAAGCALLFILSE). At 29-140 (LRESVSFFYT…TAPKSSPEPK (112 aa)) the chain is on the periplasmic side. Positions 121 and 125 each coordinate heme.

It belongs to the CcmE/CycJ family.

Its subcellular location is the cell inner membrane. Functionally, heme chaperone required for the biogenesis of c-type cytochromes. Transiently binds heme delivered by CcmC and transfers the heme to apo-cytochromes in a process facilitated by CcmF and CcmH. The protein is Cytochrome c-type biogenesis protein CcmE of Anaplasma marginale (strain St. Maries).